The primary structure comprises 522 residues: Peptide methionine sulfoxide reductase MsrA/MsrB (522 aa).

The Thioredoxin domain maps to 17 to 174; that stretch reads LALGACSPKI…ALALIRDPNA (158 aa). Cysteine 68 and cysteine 71 are oxidised to a cystine. The tract at residues 199–354 is peptide methionine sulfoxide reductase A; that stretch reads RTIYLAGGCF…PNGYCHIDIR (156 aa). The active site involves cysteine 207. In terms of domain architecture, MsrB spans 383 to 506; that stretch reads DAELKRTLTE…NGASLKFIPL (124 aa). Cysteine 440 and cysteine 495 are joined by a disulfide. Residue cysteine 495 is the Nucleophile of the active site.

This sequence in the N-terminal section; belongs to the thioredoxin family. The protein in the central section; belongs to the MsrA Met sulfoxide reductase family. It in the C-terminal section; belongs to the MsrB Met sulfoxide reductase family.

The catalysed reaction is L-methionyl-[protein] + [thioredoxin]-disulfide + H2O = L-methionyl-(S)-S-oxide-[protein] + [thioredoxin]-dithiol. The enzyme catalyses [thioredoxin]-disulfide + L-methionine + H2O = L-methionine (S)-S-oxide + [thioredoxin]-dithiol. It catalyses the reaction L-methionyl-[protein] + [thioredoxin]-disulfide + H2O = L-methionyl-(R)-S-oxide-[protein] + [thioredoxin]-dithiol. Functionally, has an important function as a repair enzyme for proteins that have been inactivated by oxidation. Catalyzes the reversible oxidation-reduction of methionine sulfoxide in proteins to methionine. In Neisseria meningitidis serogroup B (strain ATCC BAA-335 / MC58), this protein is Peptide methionine sulfoxide reductase MsrA/MsrB (msrAB).